Here is a 214-residue protein sequence, read N- to C-terminus: Membrane-spanning 4-domains subfamily A member 3 (214 aa).

Positions 1 to 31 (MASHEVDNAELGSASAHGTPGSEAGPEELNT) are disordered. Residues 1–49 (MASHEVDNAELGSASAHGTPGSEAGPEELNTSVYQPIDGSPDYQKAKLQ) lie on the Cytoplasmic side of the membrane. The helical transmembrane segment at 50–70 (VLGAIQILNAAMILALGVFLG) threads the bilayer. The Extracellular portion of the chain corresponds to 71–81 (SLQYPYHFQKH). The helical transmembrane segment at 82-102 (FFFFTFYTGYPIWGAVFFCSS) threads the bilayer. The Cytoplasmic portion of the chain corresponds to 103-124 (GTLSVVAGIKPTRTWIQNSFGM). A helical transmembrane segment spans residues 125-145 (NIASATIALVGTAFLSLNIAV). Over 146–175 (NIQSLRSCHSSSESPDLCNYMGSISNGMVS) the chain is Extracellular. Residues 176–196 (LLLILTLLELCVTISTIAMWC) traverse the membrane as a helical segment. Topologically, residues 197–214 (NANCCNSREEISSPPNSV) are cytoplasmic.

Belongs to the MS4A family. Interacts with CDKN3. Interacts with CDKN3-CDK2 complexes through its binding to CDKN3; this interaction facilitates dissociation of cyclin A from CDKN3-CDK2 complexes. As to expression, expressed specifically in hematopoietic cells and tissues.

Its subcellular location is the endomembrane system. The protein resides in the cytoplasm. It is found in the perinuclear region. Hematopoietic modulator for the G1-S cell cycle transition. Modulates the level of phosphorylation of cyclin-dependent kinase 2 (CDK2) through its direct binding to cyclin-dependent kinase inhibitor 3 (CDKN3/KAP). The chain is Membrane-spanning 4-domains subfamily A member 3 (MS4A3) from Homo sapiens (Human).